A 565-amino-acid polypeptide reads, in one-letter code: Urocanate hydratase (565 aa).

NAD(+) contacts are provided by residues 61–62 (GG), Q139, 185–187 (GMG), E205, R210, 251–252 (NA), 272–276 (QTSAH), 282–283 (YL), and Y331. C419 is a catalytic residue. The interval 453–472 (LDSGSVASPNRETESMRDGS) is disordered. Residues 463–472 (RETESMRDGS) are compositionally biased toward basic and acidic residues. Residue G501 coordinates NAD(+).

The protein belongs to the urocanase family. NAD(+) serves as cofactor.

The protein localises to the cytoplasm. It catalyses the reaction 4-imidazolone-5-propanoate = trans-urocanate + H2O. Its pathway is amino-acid degradation; L-histidine degradation into L-glutamate; N-formimidoyl-L-glutamate from L-histidine: step 2/3. Its function is as follows. Catalyzes the conversion of urocanate to 4-imidazolone-5-propionate. The chain is Urocanate hydratase from Pseudomonas syringae pv. tomato (strain ATCC BAA-871 / DC3000).